The primary structure comprises 506 residues: Cobyric acid synthase (506 aa).

Positions Asp-251 to Phe-448 constitute a GATase cobBQ-type domain. Residue Cys-332 is the Nucleophile of the active site. Residue His-440 is part of the active site.

It belongs to the CobB/CobQ family. CobQ subfamily.

The protein operates within cofactor biosynthesis; adenosylcobalamin biosynthesis. Catalyzes amidations at positions B, D, E, and G on adenosylcobyrinic A,C-diamide. NH(2) groups are provided by glutamine, and one molecule of ATP is hydrogenolyzed for each amidation. The sequence is that of Cobyric acid synthase from Salmonella dublin (strain CT_02021853).